We begin with the raw amino-acid sequence, 425 residues long: Dihydroorotase (425 aa).

Zn(2+) contacts are provided by histidine 56 and histidine 58. Substrate contacts are provided by residues 58-60 (HYR) and asparagine 90. Residues aspartate 148, histidine 175, and histidine 228 each coordinate Zn(2+). Substrate is bound at residue asparagine 274. Aspartate 301 lines the Zn(2+) pocket. Residue aspartate 301 is part of the active site. Residues histidine 305 and 319-320 (FG) contribute to the substrate site.

The protein belongs to the metallo-dependent hydrolases superfamily. DHOase family. Class I DHOase subfamily. The cofactor is Zn(2+).

The enzyme catalyses (S)-dihydroorotate + H2O = N-carbamoyl-L-aspartate + H(+). Its pathway is pyrimidine metabolism; UMP biosynthesis via de novo pathway; (S)-dihydroorotate from bicarbonate: step 3/3. Functionally, catalyzes the reversible cyclization of carbamoyl aspartate to dihydroorotate. This is Dihydroorotase from Lactobacillus delbrueckii subsp. bulgaricus (strain ATCC 11842 / DSM 20081 / BCRC 10696 / JCM 1002 / NBRC 13953 / NCIMB 11778 / NCTC 12712 / WDCM 00102 / Lb 14).